The following is a 690-amino-acid chain: Crooked neck-like protein 1 (690 aa).

HAT repeat units lie at residues 61–93 (DYKL…WEES), 95–127 (KEIQ…MEMK), 129–161 (RQVN…MEEM), 163–194 (GNVA…FELR), 196–227 (KEVE…FEEK), 229–264 (AYFA…FEEN), 266–300 (KEFE…FEKK), 310–342 (IIVS…LVES), 344–378 (AEAD…LWVN), 388–424 (KDPE…FEIR), 459–491 (REFD…LETI), 493–527 (GDIE…FEIE), 529–560 (EETE…FELS), 565–606 (GSVA…EFGT), 608–646 (SDKE…YIFP), and 648–673 (DAAN…EREA). Residues 250-467 (MDEHLYVAFA…LREFDRCRKL (218 aa)) form a mediates interaction with HSP90 region. Ser342 is subject to Phosphoserine. The Nuclear localization signal signature appears at 618–626 (PEKVKKRRK). Basic and acidic residues predominate over residues 667–679 (QQQEREAAEQDPD). Positions 667 to 690 (QQQEREAAEQDPDKDIDESESSSF) are disordered. Positions 680–690 (KDIDESESSSF) are enriched in acidic residues. Phosphoserine is present on Ser689.

This sequence belongs to the crooked-neck family. Identified in the spliceosome C complex. Present in a spliceosome complex assembled in vitro containing CRNKL1, HPRP8BP and SNRPB2. Component of the minor spliceosome, which splices U12-type introns. Interacts with PPIL2 (via the PPIase cyclophilin-type domain); they may form a trimeric complex with HSP90.

The protein localises to the nucleus. It localises to the nucleus speckle. Functionally, involved in pre-mRNA splicing process. As a component of the minor spliceosome, involved in the splicing of U12-type introns in pre-mRNAs. This Mus musculus (Mouse) protein is Crooked neck-like protein 1 (Crnkl1).